Reading from the N-terminus, the 624-residue chain is Kelch-like protein diablo (624 aa).

A compositionally biased stretch (low complexity) spans 1–21 (MGDPLLPGSTGLGSGPAAAAT). The interval 1–55 (MGDPLLPGSTGLGSGPAAAATGGSGTTGTGLGSGGTSGAERPPSPARLTHTSEKH) is disordered. The span at 22–37 (GGSGTTGTGLGSGGTS) shows a compositional bias: gly residues. Residues 73-140 (CDVVLNVGGR…CYTAHIIVEE (68 aa)) form the BTB domain. In terms of domain architecture, BACK spans 175-277 (CLGIRAFADT…SPKFLVGTVG (103 aa)). Kelch repeat units follow at residues 324 to 370 (VLFA…VLND), 372 to 418 (LYAV…VLDG), 419 to 465 (FLYA…VLSG), 467 to 512 (LYAI…VFNN), 514 to 559 (IYAV…VVNG), and 560 to 606 (QLYA…VMRA).

It participates in protein modification; protein ubiquitination. Functionally, probable substrate-specific adapter of an E3 ubiquitin-protein ligase complex which mediates the ubiquitination and subsequent proteasomal degradation of target proteins. May have a role in synapse differentiation and growth. The sequence is that of Kelch-like protein diablo from Drosophila virilis (Fruit fly).